Here is a 141-residue protein sequence, read N- to C-terminus: 4-hydroxybenzoyl-CoA thioesterase (141 aa).

Residue aspartate 17 is part of the active site. Residues tryptophan 47, 59-61 (TPI), and lysine 90 contribute to the substrate site.

Belongs to the 4-hydroxybenzoyl-CoA thioesterase family. As to quaternary structure, homotetramer.

It carries out the reaction 4-hydroxybenzoyl-CoA + H2O = 4-hydroxybenzoate + CoA + H(+). Its pathway is xenobiotic degradation; 4-chlorobenzoate degradation; 4-hydroxybenzoate from 4-chlorobenzoate: step 3/3. With respect to regulation, unaffected by EDTA, Mg(2+), Mn(2+), Fe(2+), Ca(2+), Co(2+) and Zn(2+). In terms of biological role, hydrolyzes 4-hydroxybenzoate-CoA, and to a lesser extent benzoyl-CoA and 4-chlorobenzoate-CoA. Not active against aliphatic acyl-CoA thioesters, including palmitoyl-CoA, hexanoyl-CoA and acetyl-CoA. In Pseudomonas sp. (strain CBS-3), this protein is 4-hydroxybenzoyl-CoA thioesterase.